The chain runs to 211 residues: Imidazole glycerol phosphate synthase subunit HisH (211 aa).

A Glutamine amidotransferase type-1 domain is found at 4–211; that stretch reads RVVILDYGSG…QLLANWVATL (208 aa). The Nucleophile role is filled by C82. Residues H192 and E194 contribute to the active site.

As to quaternary structure, heterodimer of HisH and HisF.

It is found in the cytoplasm. The enzyme catalyses 5-[(5-phospho-1-deoxy-D-ribulos-1-ylimino)methylamino]-1-(5-phospho-beta-D-ribosyl)imidazole-4-carboxamide + L-glutamine = D-erythro-1-(imidazol-4-yl)glycerol 3-phosphate + 5-amino-1-(5-phospho-beta-D-ribosyl)imidazole-4-carboxamide + L-glutamate + H(+). It catalyses the reaction L-glutamine + H2O = L-glutamate + NH4(+). Its pathway is amino-acid biosynthesis; L-histidine biosynthesis; L-histidine from 5-phospho-alpha-D-ribose 1-diphosphate: step 5/9. Functionally, IGPS catalyzes the conversion of PRFAR and glutamine to IGP, AICAR and glutamate. The HisH subunit catalyzes the hydrolysis of glutamine to glutamate and ammonia as part of the synthesis of IGP and AICAR. The resulting ammonia molecule is channeled to the active site of HisF. The polypeptide is Imidazole glycerol phosphate synthase subunit HisH (Thermobifida fusca (strain YX)).